Here is a 360-residue protein sequence, read N- to C-terminus: Small ribosomal subunit protein mS22 (360 aa).

Serine 54 is modified (phosphoserine). Position 211 is an N6-acetyllysine (lysine 211).

It belongs to the mitochondrion-specific ribosomal protein mS22 family. In terms of assembly, component of the mitochondrial small ribosomal subunit (mt-SSU). Mature mammalian 55S mitochondrial ribosomes consist of a small (28S) and a large (39S) subunit. The 28S small subunit contains a 12S ribosomal RNA (12S mt-rRNA) and 30 different proteins. The 39S large subunit contains a 16S rRNA (16S mt-rRNA), a copy of mitochondrial valine transfer RNA (mt-tRNA(Val)), which plays an integral structural role, and 52 different proteins.

It localises to the mitochondrion. In Homo sapiens (Human), this protein is Small ribosomal subunit protein mS22 (MRPS22).